Consider the following 596-residue polypeptide: UvrABC system protein C (596 aa).

The GIY-YIG domain occupies 14 to 91 (QQPGCYLMKD…IKKYDPRYNV (78 aa)). Positions 196 to 231 (KDIRKNLAGEMQKASEALNFERAKEIRDTIQHIDAT) constitute a UVR domain.

The protein belongs to the UvrC family. In terms of assembly, interacts with UvrB in an incision complex.

The protein resides in the cytoplasm. Its function is as follows. The UvrABC repair system catalyzes the recognition and processing of DNA lesions. UvrC both incises the 5' and 3' sides of the lesion. The N-terminal half is responsible for the 3' incision and the C-terminal half is responsible for the 5' incision. The protein is UvrABC system protein C of Oceanobacillus iheyensis (strain DSM 14371 / CIP 107618 / JCM 11309 / KCTC 3954 / HTE831).